The sequence spans 475 residues: Exodeoxyribonuclease 7 large subunit (475 aa).

Residues 452–475 (DHGLNRSSKSKRIKSKQDDQGTLF) form a disordered region. Positions 466 to 475 (SKQDDQGTLF) are enriched in basic and acidic residues.

The protein belongs to the XseA family. In terms of assembly, heterooligomer composed of large and small subunits.

The protein localises to the cytoplasm. It carries out the reaction Exonucleolytic cleavage in either 5'- to 3'- or 3'- to 5'-direction to yield nucleoside 5'-phosphates.. Bidirectionally degrades single-stranded DNA into large acid-insoluble oligonucleotides, which are then degraded further into small acid-soluble oligonucleotides. The sequence is that of Exodeoxyribonuclease 7 large subunit from Bartonella quintana (strain Toulouse) (Rochalimaea quintana).